A 358-amino-acid chain; its full sequence is Heavy metal-associated isoprenylated plant protein 37 (358 aa).

The HMA domain maps to 12–75; it reads IQTFSLRVNI…KLVKAGKHAE (64 aa). A metal cation contacts are provided by cysteine 23 and cysteine 26. Disordered stretches follow at residues 100–194 and 332–358; these read QKGQ…QNTQ and QQQSSHSHATNMSSEEDAGNNNSCNIM. A compositionally biased stretch (acidic residues) spans 128–141; it reads AEEDGDGSEEEDGD. Positions 148–181 are enriched in low complexity; the sequence is ANQQQQQNVVNAKKNSGGAAMNNGNNGVNAASKK. Polar residues-rich tracts occupy residues 184–194 and 339–358; these read QKQSNHNQNTQ and HATNMSSEEDAGNNNSCNIM. Cysteine 355 is subject to Cysteine methyl ester. The S-farnesyl cysteine moiety is linked to residue cysteine 355. A propeptide spans 356–358 (removed in mature form); the sequence is NIM.

Belongs to the HIPP family.

In terms of biological role, heavy-metal-binding protein. This Arabidopsis thaliana (Mouse-ear cress) protein is Heavy metal-associated isoprenylated plant protein 37.